An 845-amino-acid chain; its full sequence is Protein P (845 aa).

Residues 1-179 (MPLSYQHFRK…FCGSPYSWEQ (179 aa)) form a terminal protein domain (TP) region. Positions 180-348 (ELQHGRLVIK…YCLSHLVNLR (169 aa)) are spacer. A disordered region spans residues 226–252 (GLQPRQGRLASSQPSRSGSIRAKAHPS). Residues 234 to 243 (LASSQPSRSG) show a composition bias toward polar residues. Residues 349 to 692 (EDWGPCDEHG…YMNLYPVARQ (344 aa)) form a polymerase/reverse transcriptase domain (RT) region. The 244-residue stretch at 359 to 602 (EHHIRIPRTP…YSLNFMGYII (244 aa)) folds into the Reverse transcriptase domain. Mg(2+)-binding residues include aspartate 431, aspartate 553, and aspartate 554. Residues 693-845 (RPGLCQVFAD…SPLHVAWRPP (153 aa)) form a rnaseH domain (RH) region.

It belongs to the hepadnaviridae P protein family.

The catalysed reaction is DNA(n) + a 2'-deoxyribonucleoside 5'-triphosphate = DNA(n+1) + diphosphate. It carries out the reaction Endonucleolytic cleavage to 5'-phosphomonoester.. With respect to regulation, activated by host HSP70 and HSP40 in vitro to be able to bind the epsilon loop of the pgRNA. Because deletion of the RNase H region renders the protein partly chaperone-independent, the chaperones may be needed indirectly to relieve occlusion of the RNA-binding site by this domain. Inhibited by several reverse-transcriptase inhibitors: Lamivudine, Adefovir and Entecavir. Functionally, multifunctional enzyme that converts the viral RNA genome into dsDNA in viral cytoplasmic capsids. This enzyme displays a DNA polymerase activity that can copy either DNA or RNA templates, and a ribonuclease H (RNase H) activity that cleaves the RNA strand of RNA-DNA heteroduplexes in a partially processive 3'- to 5'-endonucleasic mode. Neo-synthesized pregenomic RNA (pgRNA) are encapsidated together with the P protein, and reverse-transcribed inside the nucleocapsid. Initiation of reverse-transcription occurs first by binding the epsilon loop on the pgRNA genome, and is initiated by protein priming, thereby the 5'-end of (-)DNA is covalently linked to P protein. Partial (+)DNA is synthesized from the (-)DNA template and generates the relaxed circular DNA (RC-DNA) genome. After budding and infection, the RC-DNA migrates in the nucleus, and is converted into a plasmid-like covalently closed circular DNA (cccDNA). The activity of P protein does not seem to be necessary for cccDNA generation, and is presumably released from (+)DNA by host nuclear DNA repair machinery. This chain is Protein P, found in Homo sapiens (Human).